The chain runs to 582 residues: 2-succinyl-5-enolpyruvyl-6-hydroxy-3-cyclohexene-1-carboxylate synthase (582 aa).

This sequence belongs to the TPP enzyme family. MenD subfamily. As to quaternary structure, homodimer. Mg(2+) serves as cofactor. The cofactor is Mn(2+). It depends on thiamine diphosphate as a cofactor.

The catalysed reaction is isochorismate + 2-oxoglutarate + H(+) = 5-enolpyruvoyl-6-hydroxy-2-succinyl-cyclohex-3-ene-1-carboxylate + CO2. Its pathway is quinol/quinone metabolism; 1,4-dihydroxy-2-naphthoate biosynthesis; 1,4-dihydroxy-2-naphthoate from chorismate: step 2/7. It functions in the pathway cofactor biosynthesis; phylloquinone biosynthesis. Catalyzes the thiamine diphosphate-dependent decarboxylation of 2-oxoglutarate and the subsequent addition of the resulting succinic semialdehyde-thiamine pyrophosphate anion to isochorismate to yield 2-succinyl-5-enolpyruvyl-6-hydroxy-3-cyclohexene-1-carboxylate (SEPHCHC). This is 2-succinyl-5-enolpyruvyl-6-hydroxy-3-cyclohexene-1-carboxylate synthase from Trichodesmium erythraeum (strain IMS101).